Reading from the N-terminus, the 69-residue chain is Sperm protamine P1 (69 aa).

Residues 1 to 69 (MARYRHSRSR…YSRRRRRRYY (69 aa)) are disordered.

It belongs to the protamine P1 family. As to expression, testis.

It localises to the nucleus. Its subcellular location is the chromosome. Its function is as follows. Protamines substitute for histones in the chromatin of sperm during the haploid phase of spermatogenesis. They compact sperm DNA into a highly condensed, stable and inactive complex. The protein is Sperm protamine P1 (PRM1) of Pseudochirops cupreus (Coppery ringtail).